A 338-amino-acid chain; its full sequence is Tagatose 1,6-diphosphate aldolase (338 aa).

This sequence belongs to the aldolase LacD family.

The enzyme catalyses D-tagatofuranose 1,6-bisphosphate = D-glyceraldehyde 3-phosphate + dihydroxyacetone phosphate. It functions in the pathway carbohydrate metabolism; D-tagatose 6-phosphate degradation; D-glyceraldehyde 3-phosphate and glycerone phosphate from D-tagatose 6-phosphate: step 2/2. This is Tagatose 1,6-diphosphate aldolase from Listeria monocytogenes serotype 4b (strain CLIP80459).